We begin with the raw amino-acid sequence, 232 residues long: Large ribosomal subunit protein uL3 (232 aa).

The protein belongs to the universal ribosomal protein uL3 family. As to quaternary structure, part of the 50S ribosomal subunit. Forms a cluster with proteins L14 and L19.

Functionally, one of the primary rRNA binding proteins, it binds directly near the 3'-end of the 23S rRNA, where it nucleates assembly of the 50S subunit. The protein is Large ribosomal subunit protein uL3 of Sorangium cellulosum (strain So ce56) (Polyangium cellulosum (strain So ce56)).